Here is a 212-residue protein sequence, read N- to C-terminus: Adenylate kinase (212 aa).

An ATP-binding site is contributed by Gly-10 to Thr-15. The tract at residues Ser-30 to Val-59 is NMP. AMP contacts are provided by residues Thr-31, Arg-36, Glu-57 to Val-59, Gly-86 to Arg-89, and Gln-93. The interval Gly-127–Asp-159 is LID. ATP contacts are provided by residues Arg-128 and Thr-137–Phe-138. The AMP site is built by Arg-156 and Arg-167. Gln-195 is an ATP binding site.

Belongs to the adenylate kinase family. Monomer.

The protein resides in the cytoplasm. It catalyses the reaction AMP + ATP = 2 ADP. Its pathway is purine metabolism; AMP biosynthesis via salvage pathway; AMP from ADP: step 1/1. Its function is as follows. Catalyzes the reversible transfer of the terminal phosphate group between ATP and AMP. Plays an important role in cellular energy homeostasis and in adenine nucleotide metabolism. The polypeptide is Adenylate kinase (Streptococcus pneumoniae (strain JJA)).